The chain runs to 38 residues: Large ribosomal subunit protein bL36 (38 aa).

The protein belongs to the bacterial ribosomal protein bL36 family.

The chain is Large ribosomal subunit protein bL36 from Synechococcus sp. (strain JA-2-3B'a(2-13)) (Cyanobacteria bacterium Yellowstone B-Prime).